Consider the following 524-residue polypeptide: Alkaline phosphatase, tissue-nonspecific isozyme (524 aa).

Positions 1-17 (MISPFLVLAIGTCLTNS) are cleaved as a signal peptide. Mg(2+) is bound at residue D60. Residues D60 and S110 each coordinate Zn(2+). S110 functions as the Phosphoserine intermediate in the catalytic mechanism. Position 110 is a phosphoserine (S110). C139 and C201 form a disulfide bridge. N140 carries N-linked (GlcNAc...) asparagine glycosylation. T173 lines the Mg(2+) pocket. N230 carries an N-linked (GlcNAc...) asparagine glycan. Residue E235 coordinates Ca(2+). The N-linked (GlcNAc...) asparagine glycan is linked to N271. The Ca(2+) site is built by F290 and E291. The N-linked (GlcNAc...) asparagine glycan is linked to N303. D306 is a Ca(2+) binding site. E332 provides a ligand contact to Mg(2+). Residues D337, H341, D378, and H379 each coordinate Zn(2+). N-linked (GlcNAc...) asparagine glycosylation is present at N430. Residue H454 participates in Zn(2+) binding. The cysteines at positions 489 and 497 are disulfide-linked. A lipid anchor (GPI-anchor amidated glycine) is attached at G501. Positions 502-524 (SGSAPSPGALLLPLAVLSLRTLF) are cleaved as a propeptide — removed in mature form.

Belongs to the alkaline phosphatase family. In terms of assembly, homodimer. Requires Mg(2+) as cofactor. It depends on Zn(2+) as a cofactor. Ca(2+) is required as a cofactor. In terms of processing, N-glycosylated. In terms of tissue distribution, widely expressed. Expressed in DRG neurons and spinal cord neurons.

Its subcellular location is the cell membrane. It is found in the extracellular vesicle membrane. It localises to the mitochondrion membrane. The protein resides in the mitochondrion intermembrane space. The enzyme catalyses a phosphate monoester + H2O = an alcohol + phosphate. The catalysed reaction is diphosphate + H2O = 2 phosphate + H(+). It carries out the reaction pyridoxal 5'-phosphate + H2O = pyridoxal + phosphate. It catalyses the reaction phosphoethanolamine + H2O = ethanolamine + phosphate. The enzyme catalyses N-phosphocreatine + H2O = creatine + phosphate. The catalysed reaction is ATP + H2O = ADP + phosphate + H(+). It carries out the reaction ADP + H2O = AMP + phosphate + H(+). It catalyses the reaction AMP + H2O = adenosine + phosphate. With respect to regulation, phosphatase activity is specifically inhibited by 5-((5-chloro-2-methoxyphenyl)sulfonamido)nicotinamide (SBI-425). Its function is as follows. Alkaline phosphatase that metabolizes various phosphate compounds and plays a key role in skeletal mineralization and adaptive thermogenesis. Has broad substrate specificity and can hydrolyze a considerable variety of compounds: however, only a few substrates, such as diphosphate (inorganic pyrophosphate; PPi), pyridoxal 5'-phosphate (PLP) and N-phosphocreatine are natural substrates. Plays an essential role in skeletal and dental mineralization via its ability to hydrolyze extracellular diphosphate, a potent mineralization inhibitor, to phosphate: it thereby promotes hydroxyapatite crystal formation and increases inorganic phosphate concentration. Acts in a non-redundant manner with PHOSPHO1 in skeletal mineralization: while PHOSPHO1 mediates the initiation of hydroxyapatite crystallization in the matrix vesicles (MVs), ALPL/TNAP catalyzes the spread of hydroxyapatite crystallization in the extracellular matrix. Also promotes dephosphorylation of osteopontin (SSP1), an inhibitor of hydroxyapatite crystallization in its phosphorylated state; it is however unclear whether ALPL/TNAP mediates SSP1 dephosphorylation via a direct or indirect manner. Catalyzes dephosphorylation of PLP to pyridoxal (PL), the transportable form of vitamin B6, in order to provide a sufficient amount of PLP in the brain, an essential cofactor for enzymes catalyzing the synthesis of diverse neurotransmitters. Additionally, also able to mediate ATP degradation in a stepwise manner to adenosine, thereby regulating the availability of ligands for purinergic receptors. Also capable of dephosphorylating microbial products, such as lipopolysaccharides (LPS) as well as other phosphorylated small-molecules, such as poly-inosine:cytosine (poly I:C). Acts as a key regulator of adaptive thermogenesis as part of the futile creatine cycle: localizes to the mitochondria of thermogenic fat cells and acts by mediating hydrolysis of N-phosphocreatine to initiate a futile cycle of creatine dephosphorylation and phosphorylation. During the futile creatine cycle, creatine and N-phosphocreatine are in a futile cycle, which dissipates the high energy charge of N-phosphocreatine as heat without performing any mechanical or chemical work. This chain is Alkaline phosphatase, tissue-nonspecific isozyme, found in Mus musculus (Mouse).